The primary structure comprises 233 residues: uncharacterized protein (233 aa).

An HTH gntR-type domain is found at 16–84 (KTLAKQVIER…TRGGTYFNDK (69 aa)). The segment at residues 44-63 (EMELMDILHVSRPVLREALS) is a DNA-binding region (H-T-H motif).

This is an uncharacterized protein from Bacillus subtilis (strain 168).